The chain runs to 366 residues: S-adenosylmethionine:tRNA ribosyltransferase-isomerase (366 aa).

The protein belongs to the QueA family. In terms of assembly, monomer.

The protein localises to the cytoplasm. It catalyses the reaction 7-aminomethyl-7-carbaguanosine(34) in tRNA + S-adenosyl-L-methionine = epoxyqueuosine(34) in tRNA + adenine + L-methionine + 2 H(+). It participates in tRNA modification; tRNA-queuosine biosynthesis. Transfers and isomerizes the ribose moiety from AdoMet to the 7-aminomethyl group of 7-deazaguanine (preQ1-tRNA) to give epoxyqueuosine (oQ-tRNA). The polypeptide is S-adenosylmethionine:tRNA ribosyltransferase-isomerase (Bradyrhizobium diazoefficiens (strain JCM 10833 / BCRC 13528 / IAM 13628 / NBRC 14792 / USDA 110)).